Consider the following 283-residue polypeptide: Release factor glutamine methyltransferase (283 aa).

Residues 121 to 125, D144, and N188 contribute to the S-adenosyl-L-methionine site; that span reads GTGSG. 188 to 191 serves as a coordination point for substrate; it reads NPPY.

The protein belongs to the protein N5-glutamine methyltransferase family. PrmC subfamily.

It catalyses the reaction L-glutaminyl-[peptide chain release factor] + S-adenosyl-L-methionine = N(5)-methyl-L-glutaminyl-[peptide chain release factor] + S-adenosyl-L-homocysteine + H(+). Methylates the class 1 translation termination release factors RF1/PrfA and RF2/PrfB on the glutamine residue of the universally conserved GGQ motif. The protein is Release factor glutamine methyltransferase of Bacillus cereus (strain ATCC 14579 / DSM 31 / CCUG 7414 / JCM 2152 / NBRC 15305 / NCIMB 9373 / NCTC 2599 / NRRL B-3711).